We begin with the raw amino-acid sequence, 397 residues long: MDYRPSDSSGTDDDLPPSHQGRYQRNARPTGNGRPSVLNSAPLSRVHNEMETQIHLIEQEAYSSILRAFKAQSDAITWEKESLITELRKELRVSDEEHRELLSRVNADEMIRRIREWRKANSLQSSVPQLVHDAPSPAVSGSRKKQKTSQSIASLAMGPPSPSLHPSMQPSSSALRRGGPPPGPKTKKPKTSMQYPSTGIAGRPQAGALTNEPGESGSYDPLVGRKVWTKWPDDNQYYEAVITDYNPVEGRHALVYDINSANETWEWVNLKEISPGDIRWEGEDPGISRKGGHPGQGRGTKTMARGGPASNAGGRGRGSMRMQQPKTQNGIGKKALGEIEILHTETLLKEVEKVFGSVNPNPAEVEKAKRVLRDHELALMDAIAKLEEISDGESGNI.

The segment at 1-40 (MDYRPSDSSGTDDDLPPSHQGRYQRNARPTGNGRPSVLNS) is disordered. The region spanning 50–137 (METQIHLIEQ…PQLVHDAPSP (88 aa)) is the ENT domain. Positions 81–107 (ESLITELRKELRVSDEEHRELLSRVNA) form a coiled coil. 2 disordered regions span residues 122–221 (SLQS…SYDP) and 284–330 (DPGI…TQNG). Over residues 164–174 (LHPSMQPSSSA) the composition is skewed to polar residues. Positions 175–182 (LRRGGPPP) match the Nuclear localization signal motif. Residues 363–389 (AEVEKAKRVLRDHELALMDAIAKLEEI) are a coiled coil. Ser-390 bears the Phosphoserine mark.

The protein localises to the nucleus. Its function is as follows. Probably involved in the regulation of chromatin states. Contributes to basal immunity. The chain is Protein EMSY-LIKE 3 from Arabidopsis thaliana (Mouse-ear cress).